The chain runs to 478 residues: MSFKTIVGLEIHVQLMTKTKAFCSCRADVFDLPPNTAICPVCTGQPGALPTVNSTMIDYAIKIALALNCNIHEYSRFDRKNYFYPDLPKGYQITQYFYPIATSGYMDIDVDGQTKRIRIRRLHIEEDAGKLIHEGDSITQAQYSLVDMNRCGVPLVEIVTEPDLSSPKEARIFVEKLRSILRYLEVSSGDMEKGALRCDANISIYDESAHLQSNRVEVKNMNSFRFIEKALEYEQQRIIEALKNNEDVEKETRGWDIATKMTVSMRGKEEESDYRYFPEPDIPPVIVPVERIEEIKRSLVELPDEKIERFVSVYGIPKYDATVLAMNKEIADFYEACVREIDKPKEISNWIMTEMLREMKSLESENITITPAHLCELFRLMEKGEISMKIAKEVFPTVFRTGKMPGEIIKERGLKQISDENLLENIVKKVLEDNPKAVEQYKSGKTGVIGFFVGQVMKETKGAANPQVVNKIIKQILG.

Belongs to the GatB/GatE family. GatB subfamily. In terms of assembly, heterotrimer of A, B and C subunits.

It carries out the reaction L-glutamyl-tRNA(Gln) + L-glutamine + ATP + H2O = L-glutaminyl-tRNA(Gln) + L-glutamate + ADP + phosphate + H(+). The catalysed reaction is L-aspartyl-tRNA(Asn) + L-glutamine + ATP + H2O = L-asparaginyl-tRNA(Asn) + L-glutamate + ADP + phosphate + 2 H(+). In terms of biological role, allows the formation of correctly charged Asn-tRNA(Asn) or Gln-tRNA(Gln) through the transamidation of misacylated Asp-tRNA(Asn) or Glu-tRNA(Gln) in organisms which lack either or both of asparaginyl-tRNA or glutaminyl-tRNA synthetases. The reaction takes place in the presence of glutamine and ATP through an activated phospho-Asp-tRNA(Asn) or phospho-Glu-tRNA(Gln). This Pseudothermotoga lettingae (strain ATCC BAA-301 / DSM 14385 / NBRC 107922 / TMO) (Thermotoga lettingae) protein is Aspartyl/glutamyl-tRNA(Asn/Gln) amidotransferase subunit B.